The following is a 224-amino-acid chain: Probable molybdenum cofactor guanylyltransferase (224 aa).

GTP-binding positions include 20 to 22 (LAG), Lys-33, Asp-88, and Asp-117. Residue Asp-117 coordinates Mg(2+).

The protein belongs to the MobA family. The cofactor is Mg(2+).

The protein resides in the cytoplasm. It carries out the reaction Mo-molybdopterin + GTP + H(+) = Mo-molybdopterin guanine dinucleotide + diphosphate. Functionally, transfers a GMP moiety from GTP to Mo-molybdopterin (Mo-MPT) cofactor (Moco or molybdenum cofactor) to form Mo-molybdopterin guanine dinucleotide (Mo-MGD) cofactor. The polypeptide is Probable molybdenum cofactor guanylyltransferase (Methanosarcina mazei (strain ATCC BAA-159 / DSM 3647 / Goe1 / Go1 / JCM 11833 / OCM 88) (Methanosarcina frisia)).